An 854-amino-acid chain; its full sequence is Protein asteroid (854 aa).

Residues 368-427 (SEEECSDDEHSSSSDEKFSDVEEGEDQEEADNQDEEQQEENQDVDSGDEEEEEADEGLEL) are disordered. The span at 375–387 (DEHSSSSDEKFSD) shows a compositional bias: basic and acidic residues. The segment covering 388-427 (VEEGEDQEEADNQDEEQQEENQDVDSGDEEEEEADEGLEL) has biased composition (acidic residues).

It belongs to the asteroid family. Expressed in the proliferative tissues of embryos and in the mitotically active tissue anterior to the morphogenetic furrow in eye imaginal disks.

Its function is as follows. May function in EGF receptor signaling. May play a role in compound eye morphogenesis. This chain is Protein asteroid (ast), found in Drosophila melanogaster (Fruit fly).